The sequence spans 200 residues: Ribonuclease HII (200 aa).

The 187-residue stretch at 14 to 200 (ERVAGLDEAG…HRQSFTLFRD (187 aa)) folds into the RNase H type-2 domain. Residues D20, E21, and D112 each contribute to the a divalent metal cation site.

It belongs to the RNase HII family. The cofactor is Mn(2+). Mg(2+) is required as a cofactor.

It localises to the cytoplasm. It catalyses the reaction Endonucleolytic cleavage to 5'-phosphomonoester.. Endonuclease that specifically degrades the RNA of RNA-DNA hybrids. This chain is Ribonuclease HII, found in Salinibacter ruber (strain DSM 13855 / M31).